The primary structure comprises 107 residues: Putative double-stranded DNA mimic protein YE2228 (107 aa).

This sequence belongs to the putative dsDNA mimic protein family.

May act as a double-stranded DNA (dsDNA) mimic. Probably regulates the activity of a dsDNA-binding protein. The sequence is that of Putative double-stranded DNA mimic protein YE2228 from Yersinia enterocolitica serotype O:8 / biotype 1B (strain NCTC 13174 / 8081).